The chain runs to 544 residues: Lysophosphatidylcholine acyltransferase 2 (544 aa).

Residues 1–57 (MSRCAQAAEVAATVPGAGVGNVGLRPPMVPRQASFFPPPVPNPFVQQTQIGSARRVQ) are Cytoplasmic-facing. Residues 58-78 (IVLLGIILLPIRVLLVALILL) traverse the membrane as a helical; Signal-anchor for type II membrane protein segment. Over 79–544 (LAWPFAAIST…EESTSDKKDD (466 aa)) the chain is Lumenal. The HXXXXD motif signature appears at 146–151 (HSTFFD). The short motif at 220 to 223 (EGTC) is the EGTC motif element. EF-hand domains lie at 391–426 (PVSDVLRQLFALFDRNHDGSIDFREYVIGLAVLCNP) and 428–463 (NTEEIIQVAFKLFDVDEDGYITEEEFSTILQASLGV). Residues Asp404, Asn406, Asp408, Ser410, Glu415, Asp441, Asp443, Asp445, Tyr447, and Glu452 each contribute to the Ca(2+) site. Residues 518 to 529 (VQTTPSTASNKV) show a composition bias toward polar residues. The interval 518 to 544 (VQTTPSTASNKVSPEKHEESTSDKKDD) is disordered. Over residues 530 to 544 (SPEKHEESTSDKKDD) the composition is skewed to basic and acidic residues.

This sequence belongs to the 1-acyl-sn-glycerol-3-phosphate acyltransferase family.

The protein localises to the endoplasmic reticulum membrane. The protein resides in the golgi apparatus membrane. Its subcellular location is the cell membrane. It is found in the lipid droplet. The enzyme catalyses a 1-acyl-sn-glycero-3-phosphocholine + an acyl-CoA = a 1,2-diacyl-sn-glycero-3-phosphocholine + CoA. The catalysed reaction is a 1-O-alkyl-sn-glycero-3-phosphocholine + acetyl-CoA = a 1-O-alkyl-2-acetyl-sn-glycero-3-phosphocholine + CoA. It catalyses the reaction a 1-acyl-sn-glycero-3-phosphate + an acyl-CoA = a 1,2-diacyl-sn-glycero-3-phosphate + CoA. It carries out the reaction a 1-O-(1Z-alkenyl)-sn-glycero-3-phosphocholine + an acyl-CoA = a 1-O-(1Z-alkenyl)-2-acyl-sn-glycero-3-phosphocholine + CoA. The enzyme catalyses 1-hexadecanoyl-sn-glycero-3-phosphate + (9Z)-octadecenoyl-CoA = 1-hexadecanoyl-2-(9Z-octadecenoyl)-sn-glycero-3-phosphate + CoA. The catalysed reaction is 1-(9Z-octadecenoyl)-sn-glycero-3-phosphate + (9Z)-octadecenoyl-CoA = 1,2-di-(9Z-octadecenoyl)-sn-glycero-3-phosphate + CoA. It catalyses the reaction 1-(9Z-octadecenoyl)-sn-glycero-3-phosphate + hexadecanoyl-CoA = 1-(9Z)-octadecenoyl-2-hexadecanoyl-sn-glycero-3-phosphate + CoA. It carries out the reaction 1-heptadecanoyl-sn-glycero-3-phosphate + (9Z)-octadecenoyl-CoA = 1-heptadecanoyl-2-(9Z)-octadecenoyl-sn-glycero-3-phosphate + CoA. The enzyme catalyses 1-octadecanoyl-sn-glycero-3-phosphate + (9Z)-octadecenoyl-CoA = 1-octadecanoyl-2-(9Z-octadecenoyl)-sn-glycero-3-phosphate + CoA. The catalysed reaction is heptadecanoyl-CoA + 1-(9Z-octadecenoyl)-sn-glycero-3-phosphate = 1-(9Z)-octadecenoyl-2-heptadecanoyl-sn-glycero-3-phosphate + CoA. It catalyses the reaction 1-(9Z-octadecenoyl)-sn-glycero-3-phosphate + (9Z,12Z)-octadecadienoyl-CoA = 1-(9Z)-octadecenoyl-2-(9Z,12Z)-octadecadienoyl-sn-glycero-3-phosphate + CoA. It carries out the reaction 1-(9Z-octadecenoyl)-sn-glycero-3-phosphate + tetradecanoyl-CoA = 1-(9Z)-octadecenoyl-2-tetradecanoyl-sn-glycero-3-phosphate + CoA. The enzyme catalyses pentadecanoyl-CoA + 1-(9Z-octadecenoyl)-sn-glycero-3-phosphate = 1-(9Z)-octadecenoyl-2-pentadecanoyl-sn-glycero-3-phosphate + CoA. The catalysed reaction is nonadecanoyl-CoA + 1-(9Z-octadecenoyl)-sn-glycero-3-phosphate = 1-(9Z)-octadecenoyl-2-nonadecanoyl-sn-glycero-3-phosphate + CoA. It catalyses the reaction 1-hexadecanoyl-sn-glycero-3-phosphocholine + (9Z)-octadecenoyl-CoA = 1-hexadecanoyl-2-(9Z-octadecenoyl)-sn-glycero-3-phosphocholine + CoA. It carries out the reaction 1-O-hexadecyl-sn-glycero-3-phosphocholine + acetyl-CoA = 1-O-hexadecyl-2-acetyl-sn-glycero-3-phosphocholine + CoA. The enzyme catalyses 1-O-octadecyl-sn-glycero-3-phosphocholine + acetyl-CoA = 1-O-octadecyl-2-acetyl-sn-glycero-3-phosphocholine + CoA. The catalysed reaction is 1-hexadecanoyl-sn-glycero-3-phosphocholine + acetyl-CoA = 1-hexadecanoyl-2-acetyl-sn-glycero-3-phosphocholine + CoA. It catalyses the reaction 1-octadecanoyl-sn-glycero-3-phosphocholine + acetyl-CoA = 1-octadecanoyl-2-acetyl-sn-glycero-3-phosphocholine + CoA. It carries out the reaction a 1-O-(1Z-alkenyl)-sn-glycero-3-phosphocholine + acetyl-CoA = 1-O-(1Z)-alkenyl-2-acetyl-sn-glycero-3-phosphocholine + CoA. The enzyme catalyses 1-O-octadecyl-sn-glycero-3-phosphocholine + (5Z,8Z,11Z,14Z)-eicosatetraenoyl-CoA = 1-O-octadecyl-2-(5Z,8Z,11Z,14Z)-eicosatetraenoyl-sn-glycero-3-phosphocholine + CoA. It functions in the pathway lipid metabolism; phospholipid metabolism. Exhibits both acyltransferase and acetyltransferase activities. Catalyzes the conversion of lysophosphatidylcholine (1-acyl-sn-glycero-3-phosphocholine or LPC) into phosphatidylcholine (1,2-diacyl-sn-glycero-3-phosphocholine or PC). Catalyzes the conversion 1-acyl-sn-glycerol-3-phosphate (lysophosphatidic acid or LPA) into 1,2-diacyl-sn-glycerol-3-phosphate (phosphatidic acid or PA) by incorporating an acyl moiety at the sn-2 position of the glycerol backbone. Involved in platelet-activating factor (PAF) biosynthesis by catalyzing the conversion of the PAF precursor, 1-O-alkyl-sn-glycero-3-phosphocholine (lyso-PAF) into 1-O-alkyl-2-acetyl-sn-glycero-3-phosphocholine (PAF). Also converts lyso-PAF to 1-O-alkyl-2-acyl-sn-glycero-3-phosphocholine (PC), a major component of cell membranes and a PAF precursor. Under resting conditions, acyltransferase activity is preferred. Upon acute inflammatory stimulus, acetyltransferase activity is enhanced and PAF synthesis increases. Involved in the regulation of lipid droplet number and size. This Homo sapiens (Human) protein is Lysophosphatidylcholine acyltransferase 2 (LPCAT2).